Reading from the N-terminus, the 57-residue chain is Small ribosomal subunit protein bS21 (57 aa).

Belongs to the bacterial ribosomal protein bS21 family.

This is Small ribosomal subunit protein bS21 from Phytoplasma australiense.